We begin with the raw amino-acid sequence, 391 residues long: ATP phosphoribosyltransferase regulatory subunit (391 aa).

It belongs to the class-II aminoacyl-tRNA synthetase family. HisZ subfamily. Heteromultimer composed of HisG and HisZ subunits.

Its subcellular location is the cytoplasm. It participates in amino-acid biosynthesis; L-histidine biosynthesis; L-histidine from 5-phospho-alpha-D-ribose 1-diphosphate: step 1/9. In terms of biological role, required for the first step of histidine biosynthesis. May allow the feedback regulation of ATP phosphoribosyltransferase activity by histidine. The protein is ATP phosphoribosyltransferase regulatory subunit of Nitrosomonas europaea (strain ATCC 19718 / CIP 103999 / KCTC 2705 / NBRC 14298).